The chain runs to 983 residues: Serine/threonine-protein kinase N2 (983 aa).

The REM-1 1 domain maps to 33–109 (KLDFSDTMVQ…LQELNAHIVV (77 aa)). Residue lysine 77 is modified to N6-acetyllysine. Residues 107–135 (IVVSDPEDSTDCPRTPDTPNSDSRSSTSN) are disordered. Serine 110 is modified (phosphoserine). Phosphothreonine is present on residues threonine 121 and threonine 124. The segment covering 121–135 (TPDTPNSDSRSSTSN) has biased composition (low complexity). 2 REM-1 domains span residues 121–203 (TPDT…TNEL) and 204–284 (AFDN…ELPR). 4 positions are modified to phosphoserine: serine 301, serine 305, serine 359, and serine 361. The interval 351–382 (TSVALPGWSPSDNRSSFMSRTSKSKSGSSRNL) is disordered. Residues 352-472 (SVALPGWSPS…LYLEPQGTLF (121 aa)) enclose the C2 domain. Residues 364-380 (RSSFMSRTSKSKSGSSR) are compositionally biased toward low complexity. Residues 381–462 (NLLKTDDLSN…FLDNQRHGMC (82 aa)) are necessary to rescue apical junction formation. Serine 534, serine 582, serine 619, and serine 630 each carry phosphoserine. The interval 553-588 (LAPPASDSTVTKLDFDLEPEPPPAPPRASSLGETDE) is disordered. The region spanning 656-915 (FRCCAVLGRG…AEDVKKHPFF (260 aa)) is the Protein kinase domain. ATP-binding positions include 662-670 (LGRGHFGKV) and lysine 685. Catalysis depends on aspartate 781, which acts as the Proton acceptor. A Phosphothreonine; by PDPK1 modification is found at threonine 815. Positions 916–976 (RLTDWSALMD…EEEQEMFHDF (61 aa)) are necessary for the catalytic activity. The AGC-kinase C-terminal domain occupies 916–983 (RLTDWSALMD…HDFDYVADWC (68 aa)). Serine 951 carries the phosphoserine modification. Threonine 957 bears the Phosphothreonine mark. A negatively regulates the responsiveness of the catalytic activity by cardiolipin and is required for optimal activation by the GTP-bound RhoA region spans residues 977 to 983 (DYVADWC).

This sequence belongs to the protein kinase superfamily. AGC Ser/Thr protein kinase family. PKC subfamily. In terms of assembly, interacts (via the REM repeats) with RHOA (GTP-bound form preferentially) and interacts (via the REM repeats) with RAC1 (GTP-bound form preferentially); the interactions induce its autophosphorylation. Interacts with NCK1 (via SH3 domains). Interacts with RHOC. Interacts with NCK1 and NCK2. Interacts with CD44. Interacts (via C-terminal kinase domain) with PDPK1; the interaction stimulates PDPK1 kinase activity. Interacts with MAP3K2; the interaction activates PRK2 kinase activity in a MAP3K2-independent kinase activity. Interacts (via C-terminal domain) with AKT1; the interaction occurs with the C-terminal cleavage product of PRK2 in apoptotic cells. Interacts (via C-terminus) with PTPN13 (via PDZ 3 domain). Interacts with CDK10. In terms of processing, phosphorylated during mitosis. Autophosphorylated. Phosphorylated. Phosphorylated by CDK10. Post-translationally, activated by limited proteolysis with trypsin. Proteolytically cleaved by caspase-3 during the induction of apoptotic cell death. As to expression, ubiquitous. Highly expressed in liver and lung Expressed in astrocytes (at protein level). Ubiquitous.

It is found in the cytoplasm. Its subcellular location is the nucleus. The protein localises to the membrane. The protein resides in the cell projection. It localises to the lamellipodium. It is found in the cytoskeleton. Its subcellular location is the cleavage furrow. The protein localises to the midbody. The protein resides in the cell junction. It carries out the reaction L-seryl-[protein] + ATP = O-phospho-L-seryl-[protein] + ADP + H(+). The catalysed reaction is L-threonyl-[protein] + ATP = O-phospho-L-threonyl-[protein] + ADP + H(+). Kinase activity is activated upon binding to GTP-bound Rho1/Rac1 GTPases. Activated by caspase-3 (CASP3) cleavage during apoptosis. Activated by lipids, particularly cardiolipin and to a lesser extent by other acidic phospholipids and unsaturated fatty acids. Two specific sites, Thr-815 (activation loop of the kinase domain) and Thr-957 (turn motif), need to be phosphorylated for its full activation. Functionally, PKC-related serine/threonine-protein kinase and Rho/Rac effector protein that participates in specific signal transduction responses in the cell. Plays a role in the regulation of cell cycle progression, actin cytoskeleton assembly, cell migration, cell adhesion, tumor cell invasion and transcription activation signaling processes. Phosphorylates CTTN in hyaluronan-induced astrocytes and hence decreases CTTN ability to associate with filamentous actin. Phosphorylates HDAC5, therefore lead to impair HDAC5 import. Direct RhoA target required for the regulation of the maturation of primordial junctions into apical junction formation in bronchial epithelial cells. Required for G2/M phases of the cell cycle progression and abscission during cytokinesis in a ECT2-dependent manner. Stimulates FYN kinase activity that is required for establishment of skin cell-cell adhesion during keratinocytes differentiation. Regulates epithelial bladder cells speed and direction of movement during cell migration and tumor cell invasion. Inhibits Akt pro-survival-induced kinase activity. Mediates Rho protein-induced transcriptional activation via the c-fos serum response factor (SRF). Involved in the negative regulation of ciliogenesis. This chain is Serine/threonine-protein kinase N2 (Pkn2), found in Mus musculus (Mouse).